A 427-amino-acid chain; its full sequence is Peptidase B (427 aa).

Mn(2+) is bound by residues K195 and D200. K207 is a catalytic residue. Residues D218, D277, and E279 each contribute to the Mn(2+) site. Residue R281 is part of the active site.

This sequence belongs to the peptidase M17 family. As to quaternary structure, homohexamer. It depends on Mn(2+) as a cofactor.

It is found in the cytoplasm. The enzyme catalyses Release of an N-terminal amino acid, Xaa, from a peptide or arylamide. Xaa is preferably Glu or Asp but may be other amino acids, including Leu, Met, His, Cys and Gln.. Its function is as follows. Probably plays an important role in intracellular peptide degradation. In Salmonella dublin (strain CT_02021853), this protein is Peptidase B.